Here is a 343-residue protein sequence, read N- to C-terminus: Protein SOSEKI 4 (343 aa).

The tract at residues 18–109 (RIVPVVYYLS…YVLKGSQILD (92 aa)) is DIX-like oligomerization domain. The segment at 148–194 (RKLSMDASTQTDDRRRRKSPVDEVNEVTELSREEITSPPQSDSSPET) is disordered. Polar residues predominate over residues 184-194 (SPPQSDSSPET). The Association to cell membranes signature appears at 233–234 (CG).

This sequence belongs to the SOSEKI family. As to quaternary structure, homodimer. Forms long polymer filaments with other SOKs proteins polymers (e.g. SOK1, SOK2, SOK3 and SOK4) crucial for polar localization and biological activity. Binds to ANGUSTIFOLIA (AN). In terms of tissue distribution, expressed during embryogenesis and in roots.

Its subcellular location is the cell membrane. In terms of biological role, SOSEKI proteins (SOK1-5) locally interpret global polarity cues and can influence cell division orientation to coordinate cell polarization relative to body axes, probably by guiding ANGUSTIFOLIA (AN) polarized localization. Positive regulator of auxin (indole-3-acetic acid, IAA) biosynthesis and signaling pathway leading to the modulation of seedling growth, plant and inflorescence development. Negative regulator of stress responses (e.g. salinity and osmotic stress). In Arabidopsis thaliana (Mouse-ear cress), this protein is Protein SOSEKI 4.